A 2082-amino-acid polypeptide reads, in one-letter code: Probable ATP-dependent helicase PF08_0048 (2082 aa).

Residues 66 to 138 (KIVEPAKTPE…EEKRLKLYSK (73 aa)) form the HSA domain. A compositionally biased stretch (low complexity) spans 209 to 221 (NNSEIVNNNASSV). 2 disordered regions span residues 209-234 (NNSE…DDLT) and 301-470 (NVIE…SPTR). 2 stretches are compositionally biased toward basic and acidic residues: residues 419–448 (NSDH…HIDN) and 455–465 (TGEDYKSDKEN). Residues 476–531 (KKEKYDEYDTKLKIEKREEENKNYEKDEHEYESDNYDKEKINKKKELILLKNDIEN) adopt a coiled-coil conformation. The tract at residues 532–641 (DSDETSEHIK…KNDSDDNDDI (110 aa)) is disordered. Positions 536–545 (TSEHIKRDSR) are enriched in basic and acidic residues. Low complexity predominate over residues 579–598 (DNNNSENDNNNDNNNDNNND). The span at 599 to 627 (NNDDNNDDNNDDNNDDNNDDNNDDNNDDN) shows a compositional bias: acidic residues. Positions 674-839 (LYLYKNNING…WSLLHFLMPN (166 aa)) constitute a Helicase ATP-binding domain. Position 687–694 (687–694 (DEMGLGKT)) interacts with ATP. The short motif at 790 to 793 (DEAH) is the DEAH box element. The segment at 1199 to 1255 (EQNNNNSKDNNNNIDNNNNIDNNNNIDNNNNIDNNNNIDNNNNNIDNNNNIDNHHNN) is disordered. The Helicase C-terminal domain maps to 1772 to 1922 (ALEKLLSKCK…NICINMGNFN (151 aa)). A coiled-coil region spans residues 1972-2060 (EQVENKDKMN…DEMRMKIEIE (89 aa)).

It belongs to the SNF2/RAD54 helicase family. SWR1 subfamily. Component of a chromatin-remodeling complex.

The protein localises to the nucleus. Its function is as follows. Catalytic component of a chromatin remodeling complex. The sequence is that of Probable ATP-dependent helicase PF08_0048 from Plasmodium falciparum (isolate 3D7).